The primary structure comprises 280 residues: Fe-S cluster assembly protein DRE2 (280 aa).

Positions 1–121 are N-terminal SAM-like domain; that stretch reads MSNLLVFDNS…TTLLKKSGGG (121 aa). The linker stretch occupies residues 122 to 176; the sequence is PKKFAFKRASPATAAPSTNGTNPAATVNLNSVVTLSMDDDDLMDEDDLMEDDTNL. [2Fe-2S] cluster is bound by residues C186, C198, C201, and C203. A fe-S binding site A region spans residues 186 to 203; it reads CDPGPGKKRRKACKDCTC. Positions 244, 247, 255, and 258 each coordinate [4Fe-4S] cluster. 2 short sequence motifs (cx2C motif) span residues 244-247 and 255-258; these read CGSC and CDGC. The interval 244–258 is fe-S binding site B; that stretch reads CGSCALGDAFRCDGC.

Belongs to the anamorsin family. Monomer. Interacts with TAH18. Interacts with MIA40. [2Fe-2S] cluster serves as cofactor. It depends on [4Fe-4S] cluster as a cofactor.

Its subcellular location is the cytoplasm. It localises to the mitochondrion intermembrane space. Its function is as follows. Component of the cytosolic iron-sulfur (Fe-S) protein assembly (CIA) machinery required for the maturation of extramitochondrial Fe-S proteins. Part of an electron transfer chain functioning in an early step of cytosolic Fe-S biogenesis, facilitating the de novo assembly of a [4Fe-4S] cluster on the scaffold complex CFD1-NBP35. Electrons are transferred to DRE2 from NADPH via the FAD- and FMN-containing protein TAH18. TAH18-DRE2 are also required for the assembly of the diferric tyrosyl radical cofactor of ribonucleotide reductase (RNR), probably by providing electrons for reduction during radical cofactor maturation in the catalytic small subunit RNR2. This Yarrowia lipolytica (strain CLIB 122 / E 150) (Yeast) protein is Fe-S cluster assembly protein DRE2.